The following is a 380-amino-acid chain: Phospho-N-acetylmuramoyl-pentapeptide-transferase (380 aa).

Transmembrane regions (helical) follow at residues 25-45 (RAAA…PAII), 70-90 (TTPT…VLLW), 98-118 (VLLA…DDYL), 142-162 (VLCG…TLPG), 173-193 (VLVV…VTFI), 209-229 (GLSS…AYVL), 245-265 (GAGE…GFLW), 272-294 (QVFM…AILL), and 357-377 (QVVV…LSTL).

The protein belongs to the glycosyltransferase 4 family. MraY subfamily. The cofactor is Mg(2+).

It is found in the cell inner membrane. It carries out the reaction UDP-N-acetyl-alpha-D-muramoyl-L-alanyl-gamma-D-glutamyl-meso-2,6-diaminopimeloyl-D-alanyl-D-alanine + di-trans,octa-cis-undecaprenyl phosphate = di-trans,octa-cis-undecaprenyl diphospho-N-acetyl-alpha-D-muramoyl-L-alanyl-D-glutamyl-meso-2,6-diaminopimeloyl-D-alanyl-D-alanine + UMP. Its pathway is cell wall biogenesis; peptidoglycan biosynthesis. Functionally, catalyzes the initial step of the lipid cycle reactions in the biosynthesis of the cell wall peptidoglycan: transfers peptidoglycan precursor phospho-MurNAc-pentapeptide from UDP-MurNAc-pentapeptide onto the lipid carrier undecaprenyl phosphate, yielding undecaprenyl-pyrophosphoryl-MurNAc-pentapeptide, known as lipid I. This Gemmatimonas aurantiaca (strain DSM 14586 / JCM 11422 / NBRC 100505 / T-27) protein is Phospho-N-acetylmuramoyl-pentapeptide-transferase.